We begin with the raw amino-acid sequence, 720 residues long: DNA replication licensing factor mcm7-B (720 aa).

The segment at 183 to 210 (CDQCGAETYQPIQSPTFMPLIMCPSREC) adopts a C4-type zinc-finger fold. Residues 331–537 (FYEKLAASIA…NDLRLAQHIT (207 aa)) enclose the MCM domain. ATP contacts are provided by Tyr-344, Gly-383, Ala-385, Lys-386, Ser-387, Asn-488, Arg-513, and Arg-603. The Arginine finger motif lies at 512–515 (SRFD).

It belongs to the MCM family. As to quaternary structure, component of the mcm2-7 complex (RLF-M). The complex forms a toroidal hexameric ring with the proposed subunit order mcm2-mcm6-mcm4-mcm7-mcm3-mcm5. The heterodimer of mmcm3/mcm5 interacts with mcm4, mmcm6, mcm7 and weakly with mcm2. The N-terminus is required for interaction with mmcm3, though this interaction may not be direct, and remains in a complex with mmcm3 throughout the cell cycle. Begins to associate with zmcm6 at the neurula stage. Component of the replisome complex. Component of the CMG helicase complex, composed of the mcm2-7 complex, the GINS complex and cdc45. In terms of processing, ubiquitinated by traip when forks converge following formation of DNA interstrand cross-links. Short ubiquitin chains on mcm7 promote recruitment of DNA glycosylase neil3. If the interstrand cross-link cannot be cleaved by neil3, the ubiquitin chains continue to grow on mcm7, promoting the unloading of the CMG helicase complex by the vcp/p97 ATPase.

It localises to the nucleus. The protein localises to the chromosome. The catalysed reaction is ATP + H2O = ADP + phosphate + H(+). Functionally, acts as a component of the mcm2-7 complex (mcm complex) which is the putative replicative helicase essential for 'once per cell cycle' DNA replication initiation and elongation in eukaryotic cells. The active ATPase sites in the mcm2-7 ring are formed through the interaction surfaces of two neighboring subunits such that a critical structure of a conserved arginine finger motif is provided in trans relative to the ATP-binding site of the Walker A box of the adjacent subunit. The six ATPase active sites, however, are likely to contribute differentially to the complex helicase activity. The existence of maternal and zygotic forms of mcm3 and mcm6 suggests that specific forms of mcm2-7 complexes may be used during different stages of development. The polypeptide is DNA replication licensing factor mcm7-B (mcm7-b) (Xenopus laevis (African clawed frog)).